A 601-amino-acid chain; its full sequence is Elongation factor 4 (601 aa).

Positions Asp-7–Lys-189 constitute a tr-type G domain. GTP-binding positions include Asp-19 to Thr-24 and Asn-136 to Asp-139.

Belongs to the TRAFAC class translation factor GTPase superfamily. Classic translation factor GTPase family. LepA subfamily.

It is found in the cell inner membrane. The catalysed reaction is GTP + H2O = GDP + phosphate + H(+). In terms of biological role, required for accurate and efficient protein synthesis under certain stress conditions. May act as a fidelity factor of the translation reaction, by catalyzing a one-codon backward translocation of tRNAs on improperly translocated ribosomes. Back-translocation proceeds from a post-translocation (POST) complex to a pre-translocation (PRE) complex, thus giving elongation factor G a second chance to translocate the tRNAs correctly. Binds to ribosomes in a GTP-dependent manner. In Methylorubrum populi (strain ATCC BAA-705 / NCIMB 13946 / BJ001) (Methylobacterium populi), this protein is Elongation factor 4.